The sequence spans 415 residues: Gamma-glutamyl phosphate reductase (415 aa).

It belongs to the gamma-glutamyl phosphate reductase family.

It localises to the cytoplasm. It catalyses the reaction L-glutamate 5-semialdehyde + phosphate + NADP(+) = L-glutamyl 5-phosphate + NADPH + H(+). The protein operates within amino-acid biosynthesis; L-proline biosynthesis; L-glutamate 5-semialdehyde from L-glutamate: step 2/2. In terms of biological role, catalyzes the NADPH-dependent reduction of L-glutamate 5-phosphate into L-glutamate 5-semialdehyde and phosphate. The product spontaneously undergoes cyclization to form 1-pyrroline-5-carboxylate. In Psychromonas ingrahamii (strain DSM 17664 / CCUG 51855 / 37), this protein is Gamma-glutamyl phosphate reductase.